The following is a 35-amino-acid chain: Photosystem II reaction center protein T (35 aa).

A helical membrane pass occupies residues 3 to 23; it reads ALVYTFLLVSTLGIIFFAIFF.

Belongs to the PsbT family. In terms of assembly, PSII is composed of 1 copy each of membrane proteins PsbA, PsbB, PsbC, PsbD, PsbE, PsbF, PsbH, PsbI, PsbJ, PsbK, PsbL, PsbM, PsbT, PsbY, PsbZ, Psb30/Ycf12, at least 3 peripheral proteins of the oxygen-evolving complex and a large number of cofactors. It forms dimeric complexes.

The protein localises to the plastid. It is found in the chloroplast thylakoid membrane. In terms of biological role, found at the monomer-monomer interface of the photosystem II (PS II) dimer, plays a role in assembly and dimerization of PSII. PSII is a light-driven water plastoquinone oxidoreductase, using light energy to abstract electrons from H(2)O, generating a proton gradient subsequently used for ATP formation. In Citrus sinensis (Sweet orange), this protein is Photosystem II reaction center protein T.